A 346-amino-acid polypeptide reads, in one-letter code: MTQQRPPLEIRLCGPRGFCAGVDRAIQIVVLALKKYGAPVYVRHEIVHNRYVVEGLQARGAIFVEELDEIPAAHRNQPVVFSAHGVPKSVPADAEAKNLFYLDATCPLVSKVHKQAMRHQRLGRHVILIGHSGHPEVIGTMGQLPDGAVTLIETVEDAHTCHFDDEDNLGFVTQTTLSVDDTAGIIKELQARFPNLAAPAAESICYATTNRQDAVRAAAPGCDLFLIVGAPNSSNSKRLVEVAEKAGARMSMLVQRAEDIEWEQIGDISVVGLSAGASAPEIIVDEIIDAFKARFDVKIELAETTVETENFLVNREIRDVELTVKDMAFVNGEHRVVGISKLMQGK.

Cys19 provides a ligand contact to [4Fe-4S] cluster. Positions 48 and 84 each coordinate (2E)-4-hydroxy-3-methylbut-2-enyl diphosphate. 2 residues coordinate dimethylallyl diphosphate: His48 and His84. Isopentenyl diphosphate is bound by residues His48 and His84. [4Fe-4S] cluster is bound at residue Cys106. His134 is a binding site for (2E)-4-hydroxy-3-methylbut-2-enyl diphosphate. Residue His134 participates in dimethylallyl diphosphate binding. An isopentenyl diphosphate-binding site is contributed by His134. The active-site Proton donor is Glu136. Residue Thr175 coordinates (2E)-4-hydroxy-3-methylbut-2-enyl diphosphate. Position 205 (Cys205) interacts with [4Fe-4S] cluster. Positions 233, 234, 235, and 278 each coordinate (2E)-4-hydroxy-3-methylbut-2-enyl diphosphate. The dimethylallyl diphosphate site is built by Ser233, Ser234, Asn235, and Ser278. Isopentenyl diphosphate is bound by residues Ser233, Ser234, Asn235, and Ser278.

This sequence belongs to the IspH family. The cofactor is [4Fe-4S] cluster.

It carries out the reaction isopentenyl diphosphate + 2 oxidized [2Fe-2S]-[ferredoxin] + H2O = (2E)-4-hydroxy-3-methylbut-2-enyl diphosphate + 2 reduced [2Fe-2S]-[ferredoxin] + 2 H(+). The enzyme catalyses dimethylallyl diphosphate + 2 oxidized [2Fe-2S]-[ferredoxin] + H2O = (2E)-4-hydroxy-3-methylbut-2-enyl diphosphate + 2 reduced [2Fe-2S]-[ferredoxin] + 2 H(+). It functions in the pathway isoprenoid biosynthesis; dimethylallyl diphosphate biosynthesis; dimethylallyl diphosphate from (2E)-4-hydroxy-3-methylbutenyl diphosphate: step 1/1. Its pathway is isoprenoid biosynthesis; isopentenyl diphosphate biosynthesis via DXP pathway; isopentenyl diphosphate from 1-deoxy-D-xylulose 5-phosphate: step 6/6. Its function is as follows. Catalyzes the conversion of 1-hydroxy-2-methyl-2-(E)-butenyl 4-diphosphate (HMBPP) into a mixture of isopentenyl diphosphate (IPP) and dimethylallyl diphosphate (DMAPP). Acts in the terminal step of the DOXP/MEP pathway for isoprenoid precursor biosynthesis. In Brucella abortus (strain S19), this protein is 4-hydroxy-3-methylbut-2-enyl diphosphate reductase.